We begin with the raw amino-acid sequence, 140 residues long: Small ribosomal subunit protein uS11c (140 aa).

The protein belongs to the universal ribosomal protein uS11 family. In terms of assembly, part of the 30S ribosomal subunit.

It is found in the plastid. Its subcellular location is the chloroplast. The sequence is that of Small ribosomal subunit protein uS11c from Pelargonium hortorum (Common geranium).